The following is a 103-amino-acid chain: Histone H4, minor (103 aa).

The span at 1–12 (MAGGKGGKGMGK) shows a compositional bias: gly residues. A disordered region spans residues 1–29 (MAGGKGGKGMGKVGAKRHSRKSNKASIEG). Lys-5, Lys-8, Lys-12, and Lys-16 each carry N6-acetyllysine. Residues 14–23 (GAKRHSRKSN) show a composition bias toward basic residues. Residues 16 to 21 (KRHSRK) mediate DNA binding.

It belongs to the histone H4 family. The nucleosome is a histone octamer containing two molecules each of H2A, H2B, H3 and H4 assembled in one H3-H4 heterotetramer and two H2A-H2B heterodimers. The octamer wraps approximately 147 bp of DNA.

It localises to the nucleus. It is found in the chromosome. Its function is as follows. Core component of nucleosome. Nucleosomes wrap and compact DNA into chromatin, limiting DNA accessibility to the cellular machineries which require DNA as a template. Histones thereby play a central role in transcription regulation, DNA repair, DNA replication and chromosomal stability. DNA accessibility is regulated via a complex set of post-translational modifications of histones, also called histone code, and nucleosome remodeling. The protein is Histone H4, minor of Tetrahymena pyriformis.